A 462-amino-acid chain; its full sequence is Ketoisovalerate reductase (462 aa).

Residues 34–55 form a disordered region; that stretch reads PTAVKPDRADRGDFDPGKYPVD. A compositionally biased stretch (basic and acidic residues) spans 38–49; sequence KPDRADRGDFDP. 72-77 contacts NADP(+); that stretch reads GPGNVG. A Calmoduling-binding motif is present at residues 167–184; sequence ADRLRRYLGRCSSVVFAQ. The Proton donor role is filled by Lys-290. 3 residues coordinate substrate: Asn-294, Asn-298, and Ser-403. Glu-415 lines the NADP(+) pocket.

Belongs to the ketopantoate reductase family. Homodimer. Binds to calmodulin in a calcium-independent manner.

It catalyses the reaction (R)-2-hydroxy-3-methylbutanoate + NADP(+) = 3-methyl-2-oxobutanoate + NADPH + H(+). With respect to regulation, environmental stimuli such as light and salt stress suppress activity through stimulation of calmodulin (CaM) that binds BEA2 and probably impairs its dimerization. In terms of biological role, ketoisovalerate reductase; part of the gene cluster that mediates the biosynthesis of beauvericin (BEA), a non-ribosomal cyclic hexadepsipeptide that shows antibiotic, antifungal, insecticidal, and cancer cell antiproliferative and antihaptotactic activity. Ketoisovalerate reductase BEA2 catalyzes the NADPH-specific reduction of ketoisovaleric acid to hydroxyisovalerate, a precursor for beauvericin biosynthesis. The nonribosomal cyclodepsipeptide synthetase BEA1 then catalyzes the formation of beauvericin via condensation and cyclization of 3 dipeptidol monomers, each composed of one unit of hydroxyisovalerate and one unit of N-methyl-phenylalanine. This chain is Ketoisovalerate reductase, found in Beauveria bassiana (White muscardine disease fungus).